Consider the following 86-residue polypeptide: MKSDIHPAYRQVAFHDTTADAYFIVGSTIKTDRTVQYEGKELPYVPLDVSSASHVYYTGKQKDFAKEGSAARFNQRFGSFLGAMKK.

The protein belongs to the bacterial ribosomal protein bL31 family. Type B subfamily. As to quaternary structure, part of the 50S ribosomal subunit.

In Erwinia tasmaniensis (strain DSM 17950 / CFBP 7177 / CIP 109463 / NCPPB 4357 / Et1/99), this protein is Large ribosomal subunit protein bL31B.